A 383-amino-acid chain; its full sequence is MYTFSGSKPTQLYMDILSTVIKEGDVLAPRGKRIKEIRPVMIEFKNPIRRTTFLKGRNINPFFQVAESLWILAGRSDVGFLLDYNKNMGQFSDDGVFFNAPYGERLRFWNRSDANNFIYNPLDQLRDVYEKIKADPDTRQAVAVIYNPLFDNINNDTKDRPCNLLLSFKLRNGKLDLSVYNRSNDLHWGTFGANLCQFSTILEAMATWLGVEVGSYYQITDSLHVYLDDYGAKITEDIQKVYGVNLETDEAPVVEDFEELLDPNPRMSYTMNELNQFLNEYFGIVDSLMRDDETYMHDGDCAQMLLNQIRHEPDEYIKVTLLLMVAKQALNRGMKDTVATAMNWIPLCEIKVSALRFLYKSYPEYINQYDLDEKLMKYIRREE.

Cys-162 is a catalytic residue.

Belongs to the thymidylate synthase family. As to quaternary structure, homodimer.

The catalysed reaction is dUMP + (6R)-5,10-methylene-5,6,7,8-tetrahydrofolate + H2O = 5-hydroxymethyl-dUMP + (6S)-5,6,7,8-tetrahydrofolate. Functionally, catalyzes formation of 5-hydroxymethyldeoxyuridylate (5HMdUMP) as a step in the pathway that replaces dTMP by thymidine hypermodifications in the viral genome. As a final result of the pathway of hypermodification, hydroxymethyluracil substitutes for a subset of thymidines in the viral DNA. These modifications probably prevent degradation of viral DNA by the host restriction-modification antiviral defense system. This chain is Deoxyuridylate hydroxymethyltransferase, found in Bacillus subtilis (Bacteriophage SP01).